Reading from the N-terminus, the 557-residue chain is Formate--tetrahydrofolate ligase 2 (557 aa).

Position 66–73 (Thr66–Thr73) interacts with ATP.

This sequence belongs to the formate--tetrahydrofolate ligase family.

The catalysed reaction is (6S)-5,6,7,8-tetrahydrofolate + formate + ATP = (6R)-10-formyltetrahydrofolate + ADP + phosphate. Its pathway is one-carbon metabolism; tetrahydrofolate interconversion. The sequence is that of Formate--tetrahydrofolate ligase 2 from Streptococcus pyogenes serotype M3 (strain ATCC BAA-595 / MGAS315).